The chain runs to 228 residues: Histidine/lysine/arginine/ornithine transport system permease protein HisQ (228 aa).

The Periplasmic segment spans residues 1–12; sequence MLYGFSGVILQG. A helical transmembrane segment spans residues 13-33; it reads ALVTLELAISSVVLAVIIGLI. The 200-residue stretch at 13–212 folds into the ABC transmembrane type-1 domain; it reads ALVTLELAIS…VFTTVSNGVL (200 aa). Over 34–58 the chain is Cytoplasmic; the sequence is GAGGKLSQNRLSGLIFEGYTTLIRG. The helical transmembrane segment at 59-79 threads the bilayer; sequence VPDLVLMLLIFYGLQIALNTV. Over 80–87 the chain is Periplasmic; sequence TEAMGVGQ. Residues 88–108 traverse the membrane as a helical segment; the sequence is IDIDPMVAGIITLGFIYGAYF. The Cytoplasmic segment spans residues 109–148; it reads TETFRGAFMAVPKGHIEAATAFGFTRGQVFRRIMFPSMMR. A helical transmembrane segment spans residues 149–171; the sequence is YALPGIGNNWQVILKSTALVSLL. At 172–194 the chain is on the periplasmic side; it reads GLEDVVKATQLAGKSTWEPFYFA. The helical transmembrane segment at 195-215 threads the bilayer; that stretch reads IVCGVIYLVFTTVSNGVLLFL. Topologically, residues 216-228 are cytoplasmic; sequence ERRYSVGVKRADL.

The protein belongs to the binding-protein-dependent transport system permease family. HisMQ subfamily. The HisPMQJ complex is composed of two ATP-binding proteins (HisP), two transmembrane proteins (HisM and HisQ) and a solute-binding protein (HisJ). The HisPMQ-ArgT complex is composed of two ATP-binding proteins (HisP), two transmembrane proteins (HisM and HisQ) and a solute-binding protein (ArgT).

It localises to the cell inner membrane. Functionally, part of the ABC transporter complex HisPMQJ involved in histidine transport. Is also part of the ABC transporter complex HisPMQ-ArgT involved in lysine/arginine/ornithine transport. Probably responsible for the translocation of the substrate across the membrane. The protein is Histidine/lysine/arginine/ornithine transport system permease protein HisQ (hisQ) of Escherichia coli (strain K12).